Here is a 345-residue protein sequence, read N- to C-terminus: Succinylglutamate desuccinylase (345 aa).

Positions 63, 66, and 160 each coordinate Zn(2+). Residue E224 is part of the active site.

The protein belongs to the AspA/AstE family. Succinylglutamate desuccinylase subfamily. The cofactor is Zn(2+).

It catalyses the reaction N-succinyl-L-glutamate + H2O = L-glutamate + succinate. The protein operates within amino-acid degradation; L-arginine degradation via AST pathway; L-glutamate and succinate from L-arginine: step 5/5. Functionally, transforms N(2)-succinylglutamate into succinate and glutamate. This Shewanella woodyi (strain ATCC 51908 / MS32) protein is Succinylglutamate desuccinylase.